We begin with the raw amino-acid sequence, 310 residues long: Probable plastid-lipid-associated protein 2, chloroplastic (310 aa).

A chloroplast-targeting transit peptide spans 1–59 (MATVQLSTQFSCQTRVSISPNSKSISKPPFLVPVTSIIHRPMISTGGIAVSPRRVFKVR). Position 61 is a phosphothreonine (T61). Residues 65–94 (EIGSALLAAEEAIEDVEETERLKRSLVDSL) adopt a coiled-coil conformation.

This sequence belongs to the PAP/fibrillin family.

The protein resides in the plastid. The protein localises to the chloroplast. Its subcellular location is the plastoglobule. Functionally, probably involved in light/cold stress-related jasmonate (JA) biosynthesis. This Arabidopsis thaliana (Mouse-ear cress) protein is Probable plastid-lipid-associated protein 2, chloroplastic (PAP2).